A 216-amino-acid chain; its full sequence is Glycerol uptake facilitator protein-like 6 (216 aa).

The next 2 membrane-spanning stretches (helical) occupy residues 5–25 (LAEF…VVIA) and 30–50 (LAIG…FGGI). The short motif at 56-58 (NPA) is the NPA 1 element. 3 helical membrane passes run 72–92 (ADAI…SAAV), 114–134 (IGSG…LMVI), and 147–167 (FAGL…LNLT). Positions 172–174 (NPA) match the NPA 2 motif. The chain crosses the membrane as a helical span at residues 191–213 (LWVYILAPEVGAILAAFCARVMG).

Belongs to the MIP/aquaporin (TC 1.A.8) family.

It localises to the cell membrane. Functionally, probable transporter that facilitates the transmembrane diffusion of an unknown substrate. Is not permeable to water, dihydroxyacetone, glycerol, urea, H(2)O(2) and D/L-lactic acid. This is Glycerol uptake facilitator protein-like 6 from Lactiplantibacillus plantarum (strain ATCC BAA-793 / NCIMB 8826 / WCFS1) (Lactobacillus plantarum).